The following is a 174-amino-acid chain: Endoribonuclease YbeY (174 aa).

Zn(2+) is bound by residues histidine 129, histidine 133, and histidine 139.

The protein belongs to the endoribonuclease YbeY family. Zn(2+) is required as a cofactor.

It localises to the cytoplasm. In terms of biological role, single strand-specific metallo-endoribonuclease involved in late-stage 70S ribosome quality control and in maturation of the 3' terminus of the 16S rRNA. This is Endoribonuclease YbeY from Lactobacillus delbrueckii subsp. bulgaricus (strain ATCC BAA-365 / Lb-18).